Here is a 73-residue protein sequence, read N- to C-terminus: Ubiquitin-like modifier HUB1 (73 aa).

Residues 1 to 73 enclose the Ubiquitin-like domain; that stretch reads MIEVVVNDRL…DQTNLELYYL (73 aa).

Its function is as follows. Forms conjugate with SPH1 and HBT1. Involved in morphogenesis. The protein is Ubiquitin-like modifier HUB1 (HUB1) of Saccharomyces cerevisiae (strain ATCC 204508 / S288c) (Baker's yeast).